Here is a 384-residue protein sequence, read N- to C-terminus: Galactokinase (384 aa).

Residue 34-37 participates in substrate binding; sequence EHTD. Residue 123–129 coordinates ATP; it reads SSGLSSS. Residues S129 and E161 each coordinate Mg(2+). The active-site Proton acceptor is D173. Y222 provides a ligand contact to substrate.

This sequence belongs to the GHMP kinase family. GalK subfamily.

It is found in the cytoplasm. The catalysed reaction is alpha-D-galactose + ATP = alpha-D-galactose 1-phosphate + ADP + H(+). The protein operates within carbohydrate metabolism; galactose metabolism. Functionally, catalyzes the transfer of the gamma-phosphate of ATP to D-galactose to form alpha-D-galactose-1-phosphate (Gal-1-P). This Glaesserella parasuis serovar 5 (strain SH0165) (Haemophilus parasuis) protein is Galactokinase.